A 207-amino-acid polypeptide reads, in one-letter code: N-(5'-phosphoribosyl)anthranilate isomerase (207 aa).

It belongs to the TrpF family.

It catalyses the reaction N-(5-phospho-beta-D-ribosyl)anthranilate = 1-(2-carboxyphenylamino)-1-deoxy-D-ribulose 5-phosphate. The protein operates within amino-acid biosynthesis; L-tryptophan biosynthesis; L-tryptophan from chorismate: step 3/5. This chain is N-(5'-phosphoribosyl)anthranilate isomerase, found in Legionella pneumophila (strain Paris).